Here is a 1374-residue protein sequence, read N- to C-terminus: Tripeptidyl-peptidase 2 (1374 aa).

Residues 62-558 form the Peptidase S8 domain; it reads ALLLNKTDTE…QGMIKIATAY (497 aa). Active-site charge relay system residues include Asp-93, His-314, and Ser-499.

The protein belongs to the peptidase S8 family. As to expression, expressed in intestinal fat-storing cells and some head neurons.

The catalysed reaction is Release of an N-terminal tripeptide from a polypeptide.. In terms of biological role, component of the proteolytic cascade acting downstream of the 26S proteasome in the ubiquitin-proteasome pathway. Has a role in regulation of fat storage. The chain is Tripeptidyl-peptidase 2 (tpp-2) from Caenorhabditis elegans.